A 189-amino-acid polypeptide reads, in one-letter code: MDQLQQSLLDAPIIEKNGYHYFVHPISDGLPKLDPTLLREIVIRIIRKAELQDVDRIVTPAAMGIHISTAVSLMTDIPLTVIRKRKYGLEDEVAISQQTGYSENEMYINDVRAGERVLVLDDVLSTGGTLASVLEALDGIGAEVIDTVAVIKKVGGENKVDDAGYDVKTLINVDVVDGEVVIVDEHGDS.

Belongs to the purine/pyrimidine phosphoribosyltransferase family. Archaeal HPRT subfamily.

In terms of biological role, may catalyze a purine salvage reaction, the substrate is unknown. In Natrialba magadii (strain ATCC 43099 / DSM 3394 / CCM 3739 / CIP 104546 / IAM 13178 / JCM 8861 / NBRC 102185 / NCIMB 2190 / MS3) (Natronobacterium magadii), this protein is HGPRTase-like protein 1.